The sequence spans 340 residues: rRNA adenine N-6-methyltransferase (340 aa).

The segment covering 1 to 25 has biased composition (low complexity); sequence MAGPQDRPRGRGPSSGRPQRPVGGR. The interval 1 to 37 is disordered; it reads MAGPQDRPRGRGPSSGRPQRPVGGRSQRDRDRRVLGQ. The S-adenosyl-L-methionine site is built by N38, L40, G65, E86, D111, and A127. The interval 284–340 is disordered; sequence RGGAARGPGDQRGRRGRPGGGPRPDGRAGGGPRRDAGGRRTGDGRGGRPRPPRGGQA. Over residues 301-314 the composition is skewed to gly residues; the sequence is PGGGPRPDGRAGGG. A compositionally biased stretch (basic and acidic residues) spans 315–329; it reads PRRDAGGRRTGDGRG.

It belongs to the class I-like SAM-binding methyltransferase superfamily. rRNA adenine N(6)-methyltransferase family.

In terms of biological role, involved in erythromycin resistance. The sequence is that of rRNA adenine N-6-methyltransferase (ermA) from Aeromicrobium erythreum (strain ATCC 51598 / DSM 8599 / JCM 8359 / NBRC 15406 / NRRL B-3381).